The primary structure comprises 637 residues: Early transcription factor 70 kDa subunit (637 aa).

The 154-residue stretch at 32-185 folds into the Helicase ATP-binding domain; it reads RTIIDENRSV…GHIIDLMSEE (154 aa). Position 45-52 (45-52) interacts with ATP; that stretch reads HIMGSGKT. The DEXH box motif lies at 135–138; it reads DEAH. The Helicase C-terminal domain occupies 327–507; the sequence is KFKYFINRIQ…VLPFDIKKLL (181 aa).

The protein belongs to the helicase family. VETF subfamily. In terms of assembly, heterodimer of a 70 kDa and a 82 kDa subunit. Part of the early transcription complex composed of ETF, RAP94/OPG109, and the DNA-directed RNA polymerase.

It is found in the virion. Functionally, acts with RNA polymerase to initiate transcription from early gene promoters. Is recruited by the RPO-associated protein of 94 kDa RAP94/OPG109 to form the early transcription complex, which also contains the core RNA polymerase. ETF heterodimer binds to early gene promoters. The chain is Early transcription factor 70 kDa subunit (OPG118) from Homo sapiens (Human).